Consider the following 372-residue polypeptide: Cytochrome b (372 aa).

A run of 4 helical transmembrane segments spans residues 25 to 45, 69 to 90, 105 to 125, and 170 to 190; these read FGSM…FLAI, WCLQ…YIHI, WMSG…GYVL, and FFAL…IHII. The heme b site is built by histidine 75 and histidine 89. Residues histidine 174 and histidine 188 each contribute to the heme b site. Histidine 193 lines the a ubiquinone pocket. A run of 4 helical transmembrane segments spans residues 218 to 238, 280 to 300, 312 to 332, and 339 to 358; these read YKDL…MSFS, LGGT…PFTH, MAQF…WAAS, and YITI…IINP.

It belongs to the cytochrome b family. The cytochrome bc1 complex contains 3 respiratory subunits (MT-CYB, CYC1 and UQCRFS1), 2 core proteins (UQCRC1 and UQCRC2) and probably 6 low-molecular weight proteins. Heme b is required as a cofactor.

The protein resides in the mitochondrion inner membrane. In terms of biological role, component of the ubiquinol-cytochrome c reductase complex (complex III or cytochrome b-c1 complex) that is part of the mitochondrial respiratory chain. The b-c1 complex mediates electron transfer from ubiquinol to cytochrome c. Contributes to the generation of a proton gradient across the mitochondrial membrane that is then used for ATP synthesis. In Acrochordus granulatus (Rasp-skinned water snake), this protein is Cytochrome b (MT-CYB).